The sequence spans 476 residues: Glutamyl-tRNA(Gln) amidotransferase subunit A (476 aa).

Active-site charge relay system residues include lysine 70 and serine 145. Residue serine 169 is the Acyl-ester intermediate of the active site.

It belongs to the amidase family. GatA subfamily. Heterotrimer of A, B and C subunits.

The catalysed reaction is L-glutamyl-tRNA(Gln) + L-glutamine + ATP + H2O = L-glutaminyl-tRNA(Gln) + L-glutamate + ADP + phosphate + H(+). Allows the formation of correctly charged Gln-tRNA(Gln) through the transamidation of misacylated Glu-tRNA(Gln) in organisms which lack glutaminyl-tRNA synthetase. The reaction takes place in the presence of glutamine and ATP through an activated gamma-phospho-Glu-tRNA(Gln). The sequence is that of Glutamyl-tRNA(Gln) amidotransferase subunit A from Methanosarcina mazei (strain ATCC BAA-159 / DSM 3647 / Goe1 / Go1 / JCM 11833 / OCM 88) (Methanosarcina frisia).